The sequence spans 102 residues: Small ribosomal subunit protein uS10 (102 aa).

Positions 33-59 (RMSGPIPLPTKRIRITTRKSPDGEGSA) are disordered.

This sequence belongs to the universal ribosomal protein uS10 family. As to quaternary structure, part of the 30S ribosomal subunit.

In terms of biological role, involved in the binding of tRNA to the ribosomes. The sequence is that of Small ribosomal subunit protein uS10 from Pyrococcus furiosus (strain ATCC 43587 / DSM 3638 / JCM 8422 / Vc1).